The following is a 181-amino-acid chain: Major urinary protein (181 aa).

The first 19 residues, 1 to 19 (MKLLLLLLCLGLTLVCGHA), serve as a signal peptide directing secretion. N-linked (GlcNAc...) asparagine glycosylation occurs at Asn-54. Cys-83 and Cys-176 form a disulfide bridge.

Belongs to the calycin superfamily. Lipocalin family. In terms of tissue distribution, abundant in the urine of adult male rats but absent from that of females.

It is found in the cytoplasm. Its subcellular location is the cytosol. The protein resides in the secreted. Its function is as follows. Major urinary proteins (Mups) bind and release pheromones. They may also protect pheromones from oxidation. In this context, they play a role in the regulation of social behaviors, such as aggression, mating, pup-suckling, territory establishment and dominance. Acts as a kairomone, detected by the prey vomeronasal organ and inducing fear reactions in mice. The sequence is that of Major urinary protein from Rattus norvegicus (Rat).